Here is a 259-residue protein sequence, read N- to C-terminus: uncharacterized protein (259 aa).

It belongs to the chlamydial CPn_0128/CT_035/TC_0305 family.

This is an uncharacterized protein from Chlamydia muridarum (strain MoPn / Nigg).